Here is a 353-residue protein sequence, read N- to C-terminus: 3-isopropylmalate dehydrogenase (353 aa).

G73–E86 serves as a coordination point for NAD(+). 4 residues coordinate substrate: R93, R103, R131, and D220. Mg(2+) is bound by residues D220, D244, and D248. Residue G278–N290 coordinates NAD(+).

It belongs to the isocitrate and isopropylmalate dehydrogenases family. LeuB type 1 subfamily. Homodimer. It depends on Mg(2+) as a cofactor. The cofactor is Mn(2+).

The protein resides in the cytoplasm. It carries out the reaction (2R,3S)-3-isopropylmalate + NAD(+) = 4-methyl-2-oxopentanoate + CO2 + NADH. Its pathway is amino-acid biosynthesis; L-leucine biosynthesis; L-leucine from 3-methyl-2-oxobutanoate: step 3/4. In terms of biological role, catalyzes the oxidation of 3-carboxy-2-hydroxy-4-methylpentanoate (3-isopropylmalate) to 3-carboxy-4-methyl-2-oxopentanoate. The product decarboxylates to 4-methyl-2 oxopentanoate. The protein is 3-isopropylmalate dehydrogenase of Thiobacillus denitrificans (strain ATCC 25259 / T1).